Reading from the N-terminus, the 315-residue chain is ATP synthase gamma chain (315 aa).

This sequence belongs to the ATPase gamma chain family. F-type ATPases have 2 components, CF(1) - the catalytic core - and CF(0) - the membrane proton channel. CF(1) has five subunits: alpha(3), beta(3), gamma(1), delta(1), epsilon(1). CF(0) has three main subunits: a, b and c.

It is found in the cellular thylakoid membrane. In terms of biological role, produces ATP from ADP in the presence of a proton gradient across the membrane. The gamma chain is believed to be important in regulating ATPase activity and the flow of protons through the CF(0) complex. This Nostoc sp. (strain PCC 7120 / SAG 25.82 / UTEX 2576) protein is ATP synthase gamma chain.